Here is a 426-residue protein sequence, read N- to C-terminus: Serine--tRNA ligase (426 aa).

233-235 (TSE) is a binding site for L-serine. Position 264–266 (264–266 (RAE)) interacts with ATP. An L-serine-binding site is contributed by glutamate 287. 351-354 (EISS) serves as a coordination point for ATP. Residue serine 387 participates in L-serine binding.

This sequence belongs to the class-II aminoacyl-tRNA synthetase family. Type-1 seryl-tRNA synthetase subfamily. As to quaternary structure, homodimer. The tRNA molecule binds across the dimer.

It is found in the cytoplasm. The catalysed reaction is tRNA(Ser) + L-serine + ATP = L-seryl-tRNA(Ser) + AMP + diphosphate + H(+). The enzyme catalyses tRNA(Sec) + L-serine + ATP = L-seryl-tRNA(Sec) + AMP + diphosphate + H(+). It participates in aminoacyl-tRNA biosynthesis; selenocysteinyl-tRNA(Sec) biosynthesis; L-seryl-tRNA(Sec) from L-serine and tRNA(Sec): step 1/1. Its function is as follows. Catalyzes the attachment of serine to tRNA(Ser). Is also able to aminoacylate tRNA(Sec) with serine, to form the misacylated tRNA L-seryl-tRNA(Sec), which will be further converted into selenocysteinyl-tRNA(Sec). This is Serine--tRNA ligase from Xanthomonas campestris pv. campestris (strain 8004).